The sequence spans 293 residues: 4-hydroxy-tetrahydrodipicolinate synthase (293 aa).

Residue Thr-46 coordinates pyruvate. Catalysis depends on Tyr-133, which acts as the Proton donor/acceptor. Residue Lys-161 is the Schiff-base intermediate with substrate of the active site. Val-202 serves as a coordination point for pyruvate.

This sequence belongs to the DapA family. In terms of assembly, homotetramer; dimer of dimers.

Its subcellular location is the cytoplasm. It carries out the reaction L-aspartate 4-semialdehyde + pyruvate = (2S,4S)-4-hydroxy-2,3,4,5-tetrahydrodipicolinate + H2O + H(+). The protein operates within amino-acid biosynthesis; L-lysine biosynthesis via DAP pathway; (S)-tetrahydrodipicolinate from L-aspartate: step 3/4. Functionally, catalyzes the condensation of (S)-aspartate-beta-semialdehyde [(S)-ASA] and pyruvate to 4-hydroxy-tetrahydrodipicolinate (HTPA). The chain is 4-hydroxy-tetrahydrodipicolinate synthase from Wolbachia pipientis subsp. Culex pipiens (strain wPip).